Here is a 76-residue protein sequence, read N- to C-terminus: Attractin (76 aa).

Residues 1–18 (MKVAIIILSLALVAAVFA) form the signal peptide. 3 cysteine pairs are disulfide-bonded: cysteine 22–cysteine 59, cysteine 31–cysteine 51, and cysteine 38–cysteine 44. The N-linked (GlcNAc...) asparagine glycan is linked to asparagine 26.

In terms of assembly, binds to temptin and enticin. As to expression, produced by the albumen gland of the egg cordons.

Its subcellular location is the secreted. In terms of biological role, water-borne pheromone that attract the marine mollusk Aplysia into breeding aggregations and coordinate male and female reproductive behavior within the aggregation. The polypeptide is Attractin (ATT) (Aplysia californica (California sea hare)).